A 243-amino-acid chain; its full sequence is NAD-dependent protein deacetylase (243 aa).

The Deacetylase sirtuin-type domain maps to methionine 1–glutamate 243. NAD(+) is bound by residues alanine 24, phenylalanine 35, arginine 36, glutamine 105, isoleucine 107, aspartate 108, and histidine 123. Phenylalanine 35 lines the nicotinamide pocket. Residues isoleucine 107 and aspartate 108 each contribute to the nicotinamide site. Histidine 123 (proton acceptor) is an active-site residue. Zn(2+) is bound by residues cysteine 131, cysteine 134, cysteine 151, and cysteine 154. NAD(+) is bound by residues serine 192, serine 193, asparagine 215, and aspartate 232.

It belongs to the sirtuin family. Class U subfamily. Zn(2+) is required as a cofactor.

The protein localises to the cytoplasm. It carries out the reaction N(6)-acetyl-L-lysyl-[protein] + NAD(+) + H2O = 2''-O-acetyl-ADP-D-ribose + nicotinamide + L-lysyl-[protein]. In terms of biological role, NAD-dependent protein deacetylase which modulates the activities of several enzymes which are inactive in their acetylated form. The chain is NAD-dependent protein deacetylase from Staphylococcus aureus (strain MRSA252).